The following is a 264-amino-acid chain: 3-methyl-2-oxobutanoate hydroxymethyltransferase (264 aa).

Asp45 and Asp84 together coordinate Mg(2+). 3-methyl-2-oxobutanoate-binding positions include 45-46 (DS), Asp84, and Lys112. Position 114 (Glu114) interacts with Mg(2+). Glu181 (proton acceptor) is an active-site residue.

Belongs to the PanB family. As to quaternary structure, homodecamer; pentamer of dimers. Mg(2+) is required as a cofactor.

The protein localises to the cytoplasm. The catalysed reaction is 3-methyl-2-oxobutanoate + (6R)-5,10-methylene-5,6,7,8-tetrahydrofolate + H2O = 2-dehydropantoate + (6S)-5,6,7,8-tetrahydrofolate. It functions in the pathway cofactor biosynthesis; (R)-pantothenate biosynthesis; (R)-pantoate from 3-methyl-2-oxobutanoate: step 1/2. Its function is as follows. Catalyzes the reversible reaction in which hydroxymethyl group from 5,10-methylenetetrahydrofolate is transferred onto alpha-ketoisovalerate to form ketopantoate. This Tolumonas auensis (strain DSM 9187 / NBRC 110442 / TA 4) protein is 3-methyl-2-oxobutanoate hydroxymethyltransferase.